The chain runs to 612 residues: Oligopeptide transport ATP-binding protein OppD (612 aa).

Residues 5 to 255 (LEVTDLAVTF…RRMPYTVGLL (251 aa)) enclose the ABC transporter 1 domain. ATP-binding residues include Ser43, Gly44, Ser45, Gly46, Lys47, Ser48, Ala49, Tyr61, Gln96, Arg147, Gly158, Glu159, and His213. 4 residues coordinate [4Fe-4S] cluster: Cys286, Cys292, Cys299, and Cys317. Residues 350–600 (VRVRHLVKTY…PKHEYTRRLL (251 aa)) enclose the ABC transporter 2 domain. Residues Ser396, Gly397, Ser398, Gly399, Lys400, Ser401, Thr402, Gln445, Arg495, Glu499, Gly503, and His558 each contribute to the ATP site.

The protein belongs to the ABC transporter superfamily. As to quaternary structure, the complex is composed of an ATP-binding protein (OppD), two transmembrane proteins (OppB and OppC) and a solute-binding protein (OppA).

The protein localises to the cell inner membrane. It carries out the reaction a [peptide](out) + ATP + H2O = a [peptide](in) + ADP + phosphate + H(+). Functionally, part of the ABC transporter complex OppABCD involved in the uptake of oligopeptides. Responsible for energy coupling to the transport system. This chain is Oligopeptide transport ATP-binding protein OppD, found in Mycobacterium bovis (strain ATCC BAA-935 / AF2122/97).